Consider the following 448-residue polypeptide: Allantoinase (448 aa).

His60, His62, Lys147, His183, His239, and Asp312 together coordinate Zn(2+). At Lys147 the chain carries N6-carboxylysine.

Belongs to the metallo-dependent hydrolases superfamily. Allantoinase family. As to quaternary structure, homotetramer. Zn(2+) serves as cofactor. In terms of processing, carboxylation allows a single lysine to coordinate two zinc ions.

It carries out the reaction (S)-allantoin + H2O = allantoate + H(+). It functions in the pathway nitrogen metabolism; (S)-allantoin degradation; allantoate from (S)-allantoin: step 1/1. Functionally, catalyzes the conversion of allantoin (5-ureidohydantoin) to allantoic acid by hydrolytic cleavage of the five-member hydantoin ring. In Deinococcus radiodurans (strain ATCC 13939 / DSM 20539 / JCM 16871 / CCUG 27074 / LMG 4051 / NBRC 15346 / NCIMB 9279 / VKM B-1422 / R1), this protein is Allantoinase.